Here is a 400-residue protein sequence, read N- to C-terminus: Elongation factor Tu (400 aa).

The tr-type G domain maps to 10-209 (KPHVNVGTIG…AVDSYIPTPE (200 aa)). The tract at residues 19–26 (GHVDHGKT) is G1. 19–26 (GHVDHGKT) is a binding site for GTP. Thr-26 provides a ligand contact to Mg(2+). The tract at residues 60–64 (GITIS) is G2. Residues 81-84 (DCPG) are G3. GTP-binding positions include 81 to 85 (DCPGH) and 136 to 139 (NKAD). A G4 region spans residues 136 to 139 (NKAD). Positions 174–176 (SGL) are G5.

The protein belongs to the TRAFAC class translation factor GTPase superfamily. Classic translation factor GTPase family. EF-Tu/EF-1A subfamily. As to quaternary structure, monomer.

It localises to the cytoplasm. It carries out the reaction GTP + H2O = GDP + phosphate + H(+). GTP hydrolase that promotes the GTP-dependent binding of aminoacyl-tRNA to the A-site of ribosomes during protein biosynthesis. This is Elongation factor Tu from Desulfitobacterium hafniense (strain DSM 10664 / DCB-2).